A 355-amino-acid chain; its full sequence is Protein-glutamate methylesterase/protein-glutamine glutaminase 3 (355 aa).

In terms of domain architecture, Response regulatory spans 8 to 123; it reads SVLIVDDSGM…AREVEDFVDK (116 aa). Asp-59 carries the 4-aspartylphosphate modification. A disordered region spans residues 139–161; it reads RSAPAAGPTPVPQAPPPPAAPPA. The span at 145 to 159 shows a compositional bias: pro residues; the sequence is GPTPVPQAPPPPAAP. Residues 160-350 form the CheB-type methylesterase domain; it reads PAGDGGIIAI…ASLLEITGAS (191 aa). Residues Ser-172, His-199, and Asp-292 contribute to the active site.

The protein belongs to the CheB family. Phosphorylated by CheA. Phosphorylation of the N-terminal regulatory domain activates the methylesterase activity.

The protein localises to the cytoplasm. It catalyses the reaction [protein]-L-glutamate 5-O-methyl ester + H2O = L-glutamyl-[protein] + methanol + H(+). It carries out the reaction L-glutaminyl-[protein] + H2O = L-glutamyl-[protein] + NH4(+). Involved in chemotaxis. Part of a chemotaxis signal transduction system that modulates chemotaxis in response to various stimuli. Catalyzes the demethylation of specific methylglutamate residues introduced into the chemoreceptors (methyl-accepting chemotaxis proteins or MCP) by CheR. Also mediates the irreversible deamidation of specific glutamine residues to glutamic acid. The protein is Protein-glutamate methylesterase/protein-glutamine glutaminase 3 of Paramagnetospirillum magneticum (strain ATCC 700264 / AMB-1) (Magnetospirillum magneticum).